A 251-amino-acid chain; its full sequence is Adenosylcobinamide-GDP ribazoletransferase (251 aa).

6 consecutive transmembrane segments (helical) span residues 36 to 56 (LYPFIGLIIGILWYLSFFVLS), 60 to 80 (VPIMLMAALILTVPYILTGFL), 110 to 130 (VGAFSVISVVLLLLVEFAGIF), 181 to 201 (EIILLGIYVLVALITFFTLGI), 202 to 222 (NYLIAILAMGLISFILLLKVK), and 231 to 251 (DVAGYILVLMEFTGILLLGII).

This sequence belongs to the CobS family. It depends on Mg(2+) as a cofactor.

It is found in the cell membrane. The catalysed reaction is alpha-ribazole + adenosylcob(III)inamide-GDP = adenosylcob(III)alamin + GMP + H(+). It catalyses the reaction alpha-ribazole 5'-phosphate + adenosylcob(III)inamide-GDP = adenosylcob(III)alamin 5'-phosphate + GMP + H(+). It functions in the pathway cofactor biosynthesis; adenosylcobalamin biosynthesis; adenosylcobalamin from cob(II)yrinate a,c-diamide: step 7/7. In terms of biological role, joins adenosylcobinamide-GDP and alpha-ribazole to generate adenosylcobalamin (Ado-cobalamin). Also synthesizes adenosylcobalamin 5'-phosphate from adenosylcobinamide-GDP and alpha-ribazole 5'-phosphate. The sequence is that of Adenosylcobinamide-GDP ribazoletransferase from Clostridium perfringens (strain SM101 / Type A).